The following is an 835-amino-acid chain: Leucine--tRNA ligase (835 aa).

Residues 41–52 (PYPSGQGLHVGH) carry the 'HIGH' region motif. The short motif at 611-615 (KMSKS) is the 'KMSKS' region element. Lys614 is an ATP binding site.

The protein belongs to the class-I aminoacyl-tRNA synthetase family.

The protein localises to the cytoplasm. The catalysed reaction is tRNA(Leu) + L-leucine + ATP = L-leucyl-tRNA(Leu) + AMP + diphosphate. This Elusimicrobium minutum (strain Pei191) protein is Leucine--tRNA ligase.